A 212-amino-acid chain; its full sequence is Uridine kinase (212 aa).

13-20 (GASASGKS) serves as a coordination point for ATP.

The protein belongs to the uridine kinase family.

The protein localises to the cytoplasm. It carries out the reaction uridine + ATP = UMP + ADP + H(+). The enzyme catalyses cytidine + ATP = CMP + ADP + H(+). It participates in pyrimidine metabolism; CTP biosynthesis via salvage pathway; CTP from cytidine: step 1/3. Its pathway is pyrimidine metabolism; UMP biosynthesis via salvage pathway; UMP from uridine: step 1/1. The protein is Uridine kinase of Shewanella piezotolerans (strain WP3 / JCM 13877).